Consider the following 331-residue polypeptide: HPr kinase/phosphorylase (331 aa).

Active-site residues include histidine 153 and lysine 174. 168-175 contacts ATP; it reads GKSGLGKS. Serine 175 is a binding site for Mg(2+). The active-site Proton acceptor; for phosphorylation activity. Proton donor; for dephosphorylation activity is the aspartate 192. The interval 217–226 is important for the catalytic mechanism of both phosphorylation and dephosphorylation; sequence MEIRGLGVVD. Glutamate 218 contacts Mg(2+). Arginine 259 is a catalytic residue. Residues 280-285 are important for the catalytic mechanism of dephosphorylation; sequence PIFPGK.

It belongs to the HPrK/P family. As to quaternary structure, homohexamer. The cofactor is Mg(2+).

It carries out the reaction [HPr protein]-L-serine + ATP = [HPr protein]-O-phospho-L-serine + ADP + H(+). It catalyses the reaction [HPr protein]-O-phospho-L-serine + phosphate + H(+) = [HPr protein]-L-serine + diphosphate. Its function is as follows. Catalyzes the ATP- as well as the pyrophosphate-dependent phosphorylation of a specific serine residue in HPr, a phosphocarrier protein of the phosphoenolpyruvate-dependent sugar phosphotransferase system (PTS). HprK/P also catalyzes the pyrophosphate-producing, inorganic phosphate-dependent dephosphorylation (phosphorolysis) of seryl-phosphorylated HPr (P-Ser-HPr). The polypeptide is HPr kinase/phosphorylase (Pelodictyon phaeoclathratiforme (strain DSM 5477 / BU-1)).